The chain runs to 856 residues: MDISKGLPGMQGGLHIWISENRKMVPVPEGAYGNFFEEHCYVILHVPQSPKATQGASSDLHYWVGKQAGAEAQGAAEAFQQRLQDELGGQTVLHREAQGHESDCFCSYFRPGIIYRKGGLASDLKHVETNLFNIQRLLHIKGRKHVSATEVELSWNSFNKGDIFLLDLGKMMIQWNGPKTSISEKARGLALTYSLRDRERGGGRAQIGVVDDEAKAPDLMQIMEAVLGRRVGSLRAATPSKDINQLQKANVRLYHVYEKGKDLVVLELATPPLTQDLLQEEDFYILDQGGFKIYVWQGRMSSLQERKAAFSRAVGFIQAKGYPTYTNVEVVNDGAESAAFKQLFRTWSEKRRRNQKLGGRDKSIHVKLDVGKLHTQPKLAAQLRMVDDGSGKVEVWCIQDLHRQPVDPKRHGQLCAGNCYLVLYTYQRLGRVQYILYLWQGHQATADEIEALNSNAEELDVMYGGVLVQEHVTMGSEPPHFLAIFQGQLVIFQERAGHHGKGQSASTTRLFQVQGTDSHNTRTMEVPARASSLNSSDIFLLVTASVCYLWFGKGCNGDQREMARVVVTVISRKNEETVLEGQEPPHFWEALGGRAPYPSNKRLPEEVPSFQPRLFECSSHMGCLVLAEVGFFSQEDLDKYDIMLLDTWQEIFLWLGEAASEWKEAVAWGQEYLKTHPAGRSPATPIVLVKQGHEPPTFIGWFFTWDPYKWTSHPSHKEVVDGSPAAASTISEITAEVNNLRLSRWPGNGRAGAVALQALKGSQDSSENDLVRSPKSAGSRTSSSVSSTSATINGGLRREQLMHQAVEDLPEGVDPARREFYLSDSDFQDIFGKSKEEFYSMATWRQRQEKKQLGFF.

Gelsolin-like repeat units lie at residues 22 to 74 (RKMV…EAQG), 146 to 186 (VSAT…SEKA), 263 to 307 (LVVL…QERK), 401 to 450 (LHRQ…DEIE), 521 to 561 (TRTM…DQRE), and 624 to 665 (LVLA…WKEA). A disordered region spans residues 762 to 796 (SQDSSENDLVRSPKSAGSRTSSSVSSTSATINGGL). The span at 776-791 (SAGSRTSSSVSSTSAT) shows a compositional bias: low complexity. One can recognise an HP domain in the interval 790 to 856 (ATINGGLRRE…RQEKKQLGFF (67 aa)).

Belongs to the villin/gelsolin family. As to expression, ubiquitously expressed in 16 tissues examined.

Possible tumor suppressor. In Homo sapiens (Human), this protein is Villin-like protein (VILL).